The primary structure comprises 567 residues: Geranylgeranyl transferase type-2 subunit alpha (567 aa).

PFTA repeat units follow at residues 44-78 (LDES…HLET), 88-122 (LVKA…RLPE), 124-158 (NWAR…QAAV), 159-193 (APAE…QLHP), 207-241 (VLLK…RAEP), and 363-397 (VLQS…ALDP). A Phosphoserine modification is found at S98. 5 LRR repeats span residues 442–463 (DVRV…EQLL), 464–486 (LVTH…AALR), 487–508 (CLEV…ANLP), 509–530 (RLQE…QPLV), and 534–555 (RLVL…QERL).

Belongs to the protein prenyltransferase subunit alpha family. Heterotrimer composed of RABGGTA, RABGGTB and CHM; within this trimer, RABGGTA and RABGGTB form the catalytic component B, while CHM (component A) mediates peptide substrate binding. The Rab GGTase dimer (RGGT) interacts with CHM (component A) prior to Rab protein binding; the association is stabilized by geranylgeranyl pyrophosphate (GGpp). The CHM:RGGT:Rab complex is destabilized by GGpp. Interacts with non-phosphorylated form of RAB8A; phosphorylation of RAB8A at 'Thr-72' disrupts this interaction. In terms of tissue distribution, most abundant in the heart, brain, spleen and liver. Less in the lung, muscle, kidney and testis; in these tissues less abundant than the beta subunit.

It catalyses the reaction geranylgeranyl diphosphate + L-cysteinyl-[protein] = S-geranylgeranyl-L-cysteinyl-[protein] + diphosphate. With respect to regulation, the enzymatic reaction requires the aid of a Rab escort protein (also called component A), such as CHM. Functionally, catalyzes the transfer of a geranylgeranyl moiety from geranylgeranyl diphosphate to both cysteines of Rab proteins with the C-terminal sequence -XXCC, -XCXC and -CCXX, such as RAB1A, RAB3A, RAB5A and RAB7A. In Rattus norvegicus (Rat), this protein is Geranylgeranyl transferase type-2 subunit alpha (Rabggta).